We begin with the raw amino-acid sequence, 91 residues long: Small ribosomal subunit protein uS19 (91 aa).

This sequence belongs to the universal ribosomal protein uS19 family.

Functionally, protein S19 forms a complex with S13 that binds strongly to the 16S ribosomal RNA. This chain is Small ribosomal subunit protein uS19, found in Psychrobacter arcticus (strain DSM 17307 / VKM B-2377 / 273-4).